Consider the following 247-residue polypeptide: Osmotin-like protein OSML81 (247 aa).

A signal peptide spans 1 to 21 (MGYLRSSFIFSLLAFVTYTYA). 8 disulfides stabilise this stretch: Cys30-Cys225, Cys72-Cys82, Cys87-Cys93, Cys141-Cys213, Cys146-Cys196, Cys154-Cys164, Cys168-Cys177, and Cys178-Cys183.

This sequence belongs to the thaumatin family.

The sequence is that of Osmotin-like protein OSML81 from Solanum commersonii (Commerson's wild potato).